A 177-amino-acid polypeptide reads, in one-letter code: ATP synthase subunit delta (177 aa).

Belongs to the ATPase delta chain family. As to quaternary structure, F-type ATPases have 2 components, F(1) - the catalytic core - and F(0) - the membrane proton channel. F(1) has five subunits: alpha(3), beta(3), gamma(1), delta(1), epsilon(1). F(0) has three main subunits: a(1), b(2) and c(10-14). The alpha and beta chains form an alternating ring which encloses part of the gamma chain. F(1) is attached to F(0) by a central stalk formed by the gamma and epsilon chains, while a peripheral stalk is formed by the delta and b chains.

The protein resides in the cell inner membrane. F(1)F(0) ATP synthase produces ATP from ADP in the presence of a proton or sodium gradient. F-type ATPases consist of two structural domains, F(1) containing the extramembraneous catalytic core and F(0) containing the membrane proton channel, linked together by a central stalk and a peripheral stalk. During catalysis, ATP synthesis in the catalytic domain of F(1) is coupled via a rotary mechanism of the central stalk subunits to proton translocation. Its function is as follows. This protein is part of the stalk that links CF(0) to CF(1). It either transmits conformational changes from CF(0) to CF(1) or is implicated in proton conduction. The polypeptide is ATP synthase subunit delta (Neisseria meningitidis serogroup B (strain ATCC BAA-335 / MC58)).